The following is a 351-amino-acid chain: Probable dual-specificity RNA methyltransferase RlmN (351 aa).

The active-site Proton acceptor is the E92. The region spanning 98–334 (SGDRLTVCVS…VRWSKGLGAD (237 aa)) is the Radical SAM core domain. C105 and C337 are oxidised to a cystine. Positions 112, 116, and 119 each coordinate [4Fe-4S] cluster. S-adenosyl-L-methionine contacts are provided by residues 159 to 160 (GE), S189, 218 to 220 (SLH), and N294. Catalysis depends on C337, which acts as the S-methylcysteine intermediate.

It belongs to the radical SAM superfamily. RlmN family. Requires [4Fe-4S] cluster as cofactor.

It is found in the cytoplasm. The catalysed reaction is adenosine(2503) in 23S rRNA + 2 reduced [2Fe-2S]-[ferredoxin] + 2 S-adenosyl-L-methionine = 2-methyladenosine(2503) in 23S rRNA + 5'-deoxyadenosine + L-methionine + 2 oxidized [2Fe-2S]-[ferredoxin] + S-adenosyl-L-homocysteine. It catalyses the reaction adenosine(37) in tRNA + 2 reduced [2Fe-2S]-[ferredoxin] + 2 S-adenosyl-L-methionine = 2-methyladenosine(37) in tRNA + 5'-deoxyadenosine + L-methionine + 2 oxidized [2Fe-2S]-[ferredoxin] + S-adenosyl-L-homocysteine. Specifically methylates position 2 of adenine 2503 in 23S rRNA and position 2 of adenine 37 in tRNAs. This chain is Probable dual-specificity RNA methyltransferase RlmN, found in Synechococcus sp. (strain ATCC 27144 / PCC 6301 / SAUG 1402/1) (Anacystis nidulans).